We begin with the raw amino-acid sequence, 426 residues long: D-tagatose-1,6-bisphosphate aldolase subunit KbaZ (426 aa).

It belongs to the GatZ/KbaZ family. KbaZ subfamily. Forms a complex with KbaY.

It participates in carbohydrate metabolism; D-tagatose 6-phosphate degradation; D-glyceraldehyde 3-phosphate and glycerone phosphate from D-tagatose 6-phosphate: step 2/2. Its function is as follows. Component of the tagatose-1,6-bisphosphate aldolase KbaYZ that is required for full activity and stability of the Y subunit. Could have a chaperone-like function for the proper and stable folding of KbaY. When expressed alone, KbaZ does not show any aldolase activity. The protein is D-tagatose-1,6-bisphosphate aldolase subunit KbaZ of Escherichia coli O8 (strain IAI1).